Here is a 157-residue protein sequence, read N- to C-terminus: MKLSLMAAISKNGVIGNGPDIPWSAKGEQLLFKAITYNQWLLVGRKTFESMGALPNRKYAVVTRSSFTSSDENVLVFPSIDEALNHLKTITDHVIVSGGGEIYKSLIDKVDTLHISTIDIEPEGDVYFPEIPSSFRPVFSQDFVSNINYSYQIWQKG.

Residues 2-156 form the DHFR domain; the sequence is KLSLMAAISK…INYSYQIWQK (155 aa).

Belongs to the dihydrofolate reductase family. In terms of assembly, homodimer.

The catalysed reaction is (6S)-5,6,7,8-tetrahydrofolate + NADP(+) = 7,8-dihydrofolate + NADPH + H(+). The protein operates within cofactor biosynthesis; tetrahydrofolate biosynthesis; 5,6,7,8-tetrahydrofolate from 7,8-dihydrofolate: step 1/1. Its function is as follows. Key enzyme in folate metabolism. Catalyzes an essential reaction for de novo glycine and purine synthesis, and for DNA precursor synthesis. This is Dihydrofolate reductase type 15 (dhfrXV) from Escherichia coli.